A 617-amino-acid chain; its full sequence is Chaperone protein HscA homolog (617 aa).

Residues M1–G23 are disordered.

The protein belongs to the heat shock protein 70 family.

Its function is as follows. Chaperone involved in the maturation of iron-sulfur cluster-containing proteins. Has a low intrinsic ATPase activity which is markedly stimulated by HscB. This Vibrio vulnificus (strain YJ016) protein is Chaperone protein HscA homolog.